The chain runs to 951 residues: Valine--tRNA ligase (951 aa).

A 'HIGH' region motif is present at residues 42 to 52 (PNVTGSLHMGH). The short motif at 554 to 558 (KMSKS) is the 'KMSKS' region element. Lys557 serves as a coordination point for ATP. Positions 880–944 (AGLINKEDEL…AEAKAKLIEQ (65 aa)) form a coiled coil.

Belongs to the class-I aminoacyl-tRNA synthetase family. ValS type 1 subfamily. In terms of assembly, monomer.

It is found in the cytoplasm. It carries out the reaction tRNA(Val) + L-valine + ATP = L-valyl-tRNA(Val) + AMP + diphosphate. Catalyzes the attachment of valine to tRNA(Val). As ValRS can inadvertently accommodate and process structurally similar amino acids such as threonine, to avoid such errors, it has a 'posttransfer' editing activity that hydrolyzes mischarged Thr-tRNA(Val) in a tRNA-dependent manner. The polypeptide is Valine--tRNA ligase (valS) (Escherichia coli (strain K12)).